A 450-amino-acid chain; its full sequence is Isoleucine 2-epimerase (450 aa).

Residues G115–S116, Y142, and D250–N253 each bind pyridoxal 5'-phosphate. At K280 the chain carries N6-(pyridoxal phosphate)lysine. T309 contacts pyridoxal 5'-phosphate.

Belongs to the class-III pyridoxal-phosphate-dependent aminotransferase family. Homotetramer. The cofactor is pyridoxal 5'-phosphate.

It catalyses the reaction L-isoleucine = D-allo-isoleucine. Catalyzes the epimerization of L-isoleucine to D-allo-isoleucine and D-allo-isoleucine to L-isoleucine. Can also catalyze the racemization of many nonpolar amino acids, including leucine and valine. Does not have GABA aminotransferase activity. The chain is Isoleucine 2-epimerase from Lentilactobacillus buchneri (Lactobacillus buchneri).